We begin with the raw amino-acid sequence, 237 residues long: 1-(5-phosphoribosyl)-5-[(5-phosphoribosylamino)methylideneamino] imidazole-4-carboxamide isomerase (237 aa).

Residue Asp-8 is the Proton acceptor of the active site. Asp-129 functions as the Proton donor in the catalytic mechanism.

Belongs to the HisA/HisF family.

It is found in the cytoplasm. It carries out the reaction 1-(5-phospho-beta-D-ribosyl)-5-[(5-phospho-beta-D-ribosylamino)methylideneamino]imidazole-4-carboxamide = 5-[(5-phospho-1-deoxy-D-ribulos-1-ylimino)methylamino]-1-(5-phospho-beta-D-ribosyl)imidazole-4-carboxamide. It functions in the pathway amino-acid biosynthesis; L-histidine biosynthesis; L-histidine from 5-phospho-alpha-D-ribose 1-diphosphate: step 4/9. The chain is 1-(5-phosphoribosyl)-5-[(5-phosphoribosylamino)methylideneamino] imidazole-4-carboxamide isomerase from Methanosphaera stadtmanae (strain ATCC 43021 / DSM 3091 / JCM 11832 / MCB-3).